Here is a 423-residue protein sequence, read N- to C-terminus: UPF0229 protein PSPPH_0628 (423 aa).

The segment at histidine 65–methionine 110 is disordered. Over residues glutamine 92–glycine 107 the composition is skewed to gly residues.

Belongs to the UPF0229 family.

In Pseudomonas savastanoi pv. phaseolicola (strain 1448A / Race 6) (Pseudomonas syringae pv. phaseolicola (strain 1448A / Race 6)), this protein is UPF0229 protein PSPPH_0628.